We begin with the raw amino-acid sequence, 576 residues long: Potassium-transporting ATPase potassium-binding subunit (576 aa).

12 helical membrane passes run 3-23, 68-88, 137-157, 179-199, 267-287, 294-314, 339-359, 369-389, 391-411, 430-450, 495-515, and 537-557; these read IFLD…ISPI, LYAL…TLLF, GLAL…LVLI, ILYV…SQGV, FEAF…GYMI, WFLY…QYYF, FGIG…CGAV, LGGL…GGVG, GLYG…LMIG, VVIT…ALYT, ITTG…VFYM, and LVFG…TFLP.

It belongs to the KdpA family. The system is composed of three essential subunits: KdpA, KdpB and KdpC.

It localises to the cell inner membrane. In terms of biological role, part of the high-affinity ATP-driven potassium transport (or Kdp) system, which catalyzes the hydrolysis of ATP coupled with the electrogenic transport of potassium into the cytoplasm. This subunit binds the periplasmic potassium ions and delivers the ions to the membrane domain of KdpB through an intramembrane tunnel. The protein is Potassium-transporting ATPase potassium-binding subunit of Hydrogenobaculum sp. (strain Y04AAS1).